A 117-amino-acid chain; its full sequence is UPF0102 protein RHOS4_03930 (117 aa).

This sequence belongs to the UPF0102 family.

The chain is UPF0102 protein RHOS4_03930 from Cereibacter sphaeroides (strain ATCC 17023 / DSM 158 / JCM 6121 / CCUG 31486 / LMG 2827 / NBRC 12203 / NCIMB 8253 / ATH 2.4.1.) (Rhodobacter sphaeroides).